The sequence spans 735 residues: Phosphoribosylformylglycinamidine synthase subunit PurL (735 aa).

His-49 is a catalytic residue. ATP-binding residues include Tyr-52 and Lys-91. Glu-93 contacts Mg(2+). Substrate-binding positions include 94-97 (SHNH) and Arg-116. The active-site Proton acceptor is the His-95. Residue Asp-117 participates in Mg(2+) binding. Gln-240 contributes to the substrate binding site. Mg(2+) is bound at residue Asp-268. 312–314 (ESQ) is a substrate binding site. Asp-493 and Gly-530 together coordinate ATP. Asn-531 serves as a coordination point for Mg(2+). Ser-533 is a binding site for substrate.

The protein belongs to the FGAMS family. As to quaternary structure, monomer. Part of the FGAM synthase complex composed of 1 PurL, 1 PurQ and 2 PurS subunits.

The protein localises to the cytoplasm. The enzyme catalyses N(2)-formyl-N(1)-(5-phospho-beta-D-ribosyl)glycinamide + L-glutamine + ATP + H2O = 2-formamido-N(1)-(5-O-phospho-beta-D-ribosyl)acetamidine + L-glutamate + ADP + phosphate + H(+). It participates in purine metabolism; IMP biosynthesis via de novo pathway; 5-amino-1-(5-phospho-D-ribosyl)imidazole from N(2)-formyl-N(1)-(5-phospho-D-ribosyl)glycinamide: step 1/2. In terms of biological role, part of the phosphoribosylformylglycinamidine synthase complex involved in the purines biosynthetic pathway. Catalyzes the ATP-dependent conversion of formylglycinamide ribonucleotide (FGAR) and glutamine to yield formylglycinamidine ribonucleotide (FGAM) and glutamate. The FGAM synthase complex is composed of three subunits. PurQ produces an ammonia molecule by converting glutamine to glutamate. PurL transfers the ammonia molecule to FGAR to form FGAM in an ATP-dependent manner. PurS interacts with PurQ and PurL and is thought to assist in the transfer of the ammonia molecule from PurQ to PurL. In Methylocella silvestris (strain DSM 15510 / CIP 108128 / LMG 27833 / NCIMB 13906 / BL2), this protein is Phosphoribosylformylglycinamidine synthase subunit PurL.